We begin with the raw amino-acid sequence, 529 residues long: Peptide chain release factor 3 (529 aa).

A tr-type G domain is found at 11–280; sequence ATRRTFAIIS…GLVQWAPPPQ (270 aa). GTP is bound by residues 20–27, 88–92, and 142–145; these read SHPDAGKT, DTPGH, and NKLD.

The protein belongs to the TRAFAC class translation factor GTPase superfamily. Classic translation factor GTPase family. PrfC subfamily.

The protein resides in the cytoplasm. Functionally, increases the formation of ribosomal termination complexes and stimulates activities of RF-1 and RF-2. It binds guanine nucleotides and has strong preference for UGA stop codons. It may interact directly with the ribosome. The stimulation of RF-1 and RF-2 is significantly reduced by GTP and GDP, but not by GMP. The chain is Peptide chain release factor 3 from Alcanivorax borkumensis (strain ATCC 700651 / DSM 11573 / NCIMB 13689 / SK2).